The primary structure comprises 299 residues: dTDP-4-dehydrorhamnose reductase (299 aa).

Residues 10-12 (GQV), Asp30, 39-40 (DF), and 63-65 (AHT) contribute to the NADH site. 11–12 (QV) is an NADPH binding site. Residues 39 to 40 (DF), 63 to 65 (AHT), and Tyr102 each bind NADPH. Residue 104 to 105 (TD) participates in dTDP-beta-L-rhamnose binding. NADH contacts are provided by Tyr128 and Lys132. Tyr128 and Lys132 together coordinate NADPH. The active-site Proton donor/acceptor is the Tyr128. Trp153 is a binding site for dTDP-beta-L-rhamnose.

The protein belongs to the dTDP-4-dehydrorhamnose reductase family. As to quaternary structure, homodimer. Requires Mg(2+) as cofactor.

It carries out the reaction dTDP-beta-L-rhamnose + NADP(+) = dTDP-4-dehydro-beta-L-rhamnose + NADPH + H(+). It functions in the pathway carbohydrate biosynthesis; dTDP-L-rhamnose biosynthesis. It participates in bacterial outer membrane biogenesis; LPS O-antigen biosynthesis. In terms of biological role, involved in the biosynthesis of the dTDP-L-rhamnose which is an important component of lipopolysaccharide (LPS). Catalyzes the reduction of dTDP-6-deoxy-L-lyxo-4-hexulose to yield dTDP-L-rhamnose. RmlD uses NADH and NADPH nearly equally well. In Escherichia coli (strain K12), this protein is dTDP-4-dehydrorhamnose reductase.